A 929-amino-acid chain; its full sequence is Diacylglycerol kinase zeta (929 aa).

A compositionally biased stretch (basic and acidic residues) spans 1 to 14 (MEPRDPSPEARSSD). Disordered stretches follow at residues 1-46 (MEPR…RRFP) and 59-80 (KSGLQHLAPPPPTPGAPCGESE). Residues 15-24 (SESASASSSG) are compositionally biased toward low complexity. Over residues 25 to 37 (SERDADPEPDKAP) the composition is skewed to basic and acidic residues. Phorbol-ester/DAG-type zinc fingers lie at residues 98-153 (HIWF…NFRC) and 173-231 (HHWV…EEPC). Positions 257–281 (KASKKKKRASFKRRSSKKGPEEGRW) are disordered. Basic residues predominate over residues 258–273 (ASKKKKRASFKRRSSK). Residues 279–417 (GRWRPFIIRP…HVEEGNVVQL (139 aa)) are mediates interaction with RASGRP1. The DAGKc domain maps to 292-426 (PLMKPLLVFV…LDRWDLRAEP (135 aa)). Positions 362–370 (LSTLDQLRL) match the Nuclear export signal motif. Residues 421-441 (DLRAEPNPEAGPEERDDGATD) are disordered. At serine 706 the chain carries Phosphoserine. A disordered region spans residues 760–783 (ARPDLPTPTSPLPASPCSPTPGSL). A compositionally biased stretch (pro residues) spans 764–778 (LPTPTSPLPASPCSP). Serine 782 is modified (phosphoserine). 2 ANK repeats span residues 823–853 (QSRTLLHHAVSTGSKEVVRYLLDHAPPEILD) and 858–887 (NGETCLHQAAALGQRTICHYIVEAGASLMK). The short motif at 925–929 (QETAV) is the PDZ-binding element.

This sequence belongs to the eukaryotic diacylglycerol kinase family. In terms of assembly, interacts (via PDZ-binding motif) with the PDZ domain of the syntrophin SNTG1 and that of SNX27. Interacts with IRS1 in the absence of insulin; insulin stimulation decreases this interaction. Found in a ternary complex with IRS1 and PIP5K1A in the absence of insulin. Interacts with PIP5K1A. Forms a signaling complex with RASGRP1 and HRAS.

Its subcellular location is the nucleus. It is found in the cytoplasm. The protein localises to the cytosol. It localises to the cell membrane. The protein resides in the cell projection. Its subcellular location is the lamellipodium. The catalysed reaction is a 1,2-diacyl-sn-glycerol + ATP = a 1,2-diacyl-sn-glycero-3-phosphate + ADP + H(+). It carries out the reaction a 1-O-alkyl-sn-glycerol + ATP = a 1-O-alkyl-sn-glycero-3-phosphate + ADP + H(+). The enzyme catalyses 1-O-alkyl-2-acyl-sn-glycerol + ATP = 1-O-alkyl-2-acyl-sn-glycero-3-phosphate + ADP + H(+). It catalyses the reaction 1,2-didecanoyl-sn-glycerol + ATP = 1,2-didecanoyl-sn-glycero-3-phosphate + ADP + H(+). The catalysed reaction is 1,2-ditetradecanoyl-sn-glycerol + ATP = 1,2-ditetradecanoyl-sn-glycero-3-phosphate + ADP + H(+). It carries out the reaction 1-hexadecanoyl-2-(9Z-octadecenoyl)-sn-glycerol + ATP = 1-hexadecanoyl-2-(9Z-octadecenoyl)-sn-glycero-3-phosphate + ADP + H(+). The enzyme catalyses 1-hexadecanoyl-2-(5Z,8Z,11Z,14Z-eicosatetraenoyl)-sn-glycerol + ATP = 1-hexadecanoyl-2-(5Z,8Z,11Z,14Z-eicosatetraenoyl)-sn-glycero-3-phosphate + ADP + H(+). It catalyses the reaction 1-octadecanoyl-2-(9Z-octadecenoyl)-sn-glycerol + ATP = 1-octadecanoyl-2-(9Z-octadecenoyl)-sn-glycero-3-phosphate + ADP + H(+). The catalysed reaction is 1-octadecanoyl-2-(5Z,8Z,11Z,14Z-eicosatetraenoyl)-sn-glycerol + ATP = 1-octadecanoyl-2-(5Z,8Z,11Z,14Z-eicosatetraenoyl)-sn-glycero-3-phosphate + ADP + H(+). It carries out the reaction 1-octadecanoyl-2-(4Z,7Z,10Z,13Z,16Z,19Z-docosahexaenoyl)-sn-glycerol + ATP = 1-octadecanoyl-2-(4Z,7Z,10Z,13Z,16Z,19Z-docosahexaenoyl)-sn-glycero-3-phosphate + ADP + H(+). The enzyme catalyses 1,2-di-(9Z-octadecenoyl)-sn-glycerol + ATP = 1,2-di-(9Z-octadecenoyl)-sn-glycero-3-phosphate + ADP + H(+). It catalyses the reaction 1-(9Z-octadecenoyl)-2-hexadecanoyl-sn-glycerol + ATP = 1-(9Z)-octadecenoyl-2-hexadecanoyl-sn-glycero-3-phosphate + ADP + H(+). The catalysed reaction is 1-eicosanoyl-2-(5Z,8Z,11Z,14Z)-eicosatetraenoyl-sn-glycerol + ATP = 1-eicosanoyl-2-(5Z,8Z,11Z,14Z)-eicosatetraenoyl-sn-glycero-3-phosphate + ADP + H(+). It carries out the reaction 1,2-di-(5Z,8Z,11Z,14Z)-eicosatetraenoyl-sn-glycerol + ATP = 1,2-di-(5Z,8Z,11Z,14Z)-eicosatetraenoyl-sn-glycero-3-phosphate + ADP + H(+). The enzyme catalyses 1-O-hexadecyl-2-acetyl-sn-glycerol + ATP = 1-O-hexadecyl-2-acetyl-sn-glycero-3-phosphate + ADP + H(+). It catalyses the reaction 1-O-hexadecyl-2-(5Z,8Z,11Z,14Z-eicosatetraenoyl)-sn-glycerol + ATP = 1-O-hexadecyl-2-(5Z,8Z,11Z,14Z-eicosatetraenoyl)-sn-glycero-3-phosphate + ADP + H(+). The catalysed reaction is 1-O-hexadecyl-2-(9Z-octadecenoyl)-sn-glycerol + ATP = 1-O-hexadecyl-2-(9Z-octadecenoyl)-sn-glycero-3-phosphate + ADP + H(+). It carries out the reaction 1-O-hexadecyl-sn-glycerol + ATP = 1-O-hexadecyl-sn-glycero-3-phosphate + ADP + H(+). It participates in lipid metabolism; glycerolipid metabolism. Functionally, diacylglycerol kinase that converts diacylglycerol/DAG into phosphatidic acid/phosphatidate/PA and regulates the respective levels of these two bioactive lipids. Thereby, acts as a central switch between the signaling pathways activated by these second messengers with different cellular targets and opposite effects in numerous biological processes. Also plays an important role in the biosynthesis of complex lipids. Does not exhibit an acyl chain-dependent substrate specificity among diacylglycerol species. Can also phosphorylate 1-alkyl-2-acylglycerol in vitro but less efficiently and with a preference for alkylacylglycerols containing an arachidonoyl group. The biological processes it is involved in include T cell activation since it negatively regulates T-cell receptor signaling which is in part mediated by diacylglycerol. By generating phosphatidic acid, stimulates PIP5KIA activity which regulates actin polymerization. Through the same mechanism could also positively regulate insulin-induced translocation of SLC2A4 to the cell membrane. Regulates RASGRP1 activity. This chain is Diacylglycerol kinase zeta, found in Rattus norvegicus (Rat).